The sequence spans 2242 residues: DEP domain-containing protein DDB_G0279099 (2242 aa).

Disordered stretches follow at residues 388-465 (SQNT…SNNS), 576-644 (DSNA…YSRV), 701-730 (PILRNGGTINNNNNNQQNHPISPSNSFDQK), 871-965 (DPTT…TKKS), 1077-1194 (QLQL…AFNS), 1287-1336 (GSQQ…MNGS), 1384-1414 (SELLPSSSGASSSSSNTLSSSNSGENNALPE), 1446-1471 (AQSSLLNSSTNNANSNNSSNSTNTSG), and 1502-1521 (SNNNTYTNNNNNNNSINSLN). A coiled-coil region spans residues 392 to 440 (IQNNNNNNNNNNNNNNNNNNNNNNNNNNNNNNNNNNNNNSNNNKNNQNN). Low complexity predominate over residues 581 to 614 (GGNNNNNYNNNNGNGNGHNHNNHNNNNNNNNNND). The segment covering 622 to 631 (EPSDFSDTED) has biased composition (acidic residues). Polar residues-rich tracts occupy residues 632 to 642 (NSSTTPNSQYS) and 719 to 729 (HPISPSNSFDQ). A compositionally biased stretch (low complexity) spans 872-955 (PTTTTTTGGT…PNSSNTVPNS (84 aa)). Residues 1066–1101 (IPTVENNQHQQQLQLEQQEKEKEKARLAALEKKKPF) adopt a coiled-coil conformation. The span at 1082-1106 (QQEKEKEKARLAALEKKKPFPREDS) shows a compositional bias: basic and acidic residues. Low complexity-rich tracts occupy residues 1108-1182 (STLI…ATTA) and 1287-1299 (GSQQQQQLIGSQS). Over residues 1300-1311 (APTSPLTPHKNI) the composition is skewed to polar residues. Composition is skewed to low complexity over residues 1312–1336 (NTNNNNNNNTTTNTTNNNNSVMNGS), 1384–1410 (SELLPSSSGASSSSSNTLSSSNSGENN), and 1446–1470 (AQSSLLNSSTNNANSNNSSNSTNTS). The 74-residue stretch at 1556 to 1629 (IGIKMTERKY…DGQFYYRLKE (74 aa)) folds into the DEP domain. A compositionally biased stretch (low complexity) spans 1645–1668 (TNNNFNNNNTNSNNNQQQQQQQQS). Disordered stretches follow at residues 1645–1763 (TNNN…SMSN), 1803–1910 (DEAN…QQQQ), 2122–2145 (NYNNNNNNNNNNNGGGNGNPNLLK), and 2165–2218 (NSDT…KNEM). The segment covering 1669–1702 (IPSVTSSAVNSPNKDSNTPDHSPISSPKQIGNKL) has biased composition (polar residues). 2 stretches are compositionally biased toward low complexity: residues 1703 to 1760 (SSSS…IQSS) and 1807 to 1848 (GDNN…SSNS). The stretch at 1791–1821 (LTNKEKDKEKEIDEANGDNNNNNNNNNNNNN) forms a coiled coil. Polar residues-rich tracts occupy residues 1849–1871 (GQGSLNSTLSSIPPATTPNTNPL) and 1879–1889 (YGSSVQNSNQH). Composition is skewed to low complexity over residues 1890-1910 (QQQQPQQPQQQQQQQQQQQQQ) and 2122-2133 (NYNNNNNNNNNN). Composition is skewed to basic and acidic residues over residues 2166 to 2181 (SDTEEKNNESDSDNNH) and 2192 to 2218 (DTDHLSESHEGSHKNESDKEGRDKNEM).

The protein in the N-terminal section; belongs to the IML1 family.

In Dictyostelium discoideum (Social amoeba), this protein is DEP domain-containing protein DDB_G0279099.